Consider the following 560-residue polypeptide: DNA ligase B (560 aa).

Catalysis depends on lysine 124, which acts as the N6-AMP-lysine intermediate.

This sequence belongs to the NAD-dependent DNA ligase family. LigB subfamily.

It carries out the reaction NAD(+) + (deoxyribonucleotide)n-3'-hydroxyl + 5'-phospho-(deoxyribonucleotide)m = (deoxyribonucleotide)n+m + AMP + beta-nicotinamide D-nucleotide.. In terms of biological role, catalyzes the formation of phosphodiester linkages between 5'-phosphoryl and 3'-hydroxyl groups in double-stranded DNA using NAD as a coenzyme and as the energy source for the reaction. In Escherichia coli O157:H7, this protein is DNA ligase B.